The primary structure comprises 102 residues: MHVKQGDTVKILTGKDKGKIGEITKIIKGSNQVVVQDINVKKKHVKPRKEGEIGKILQFEAPIHSSNVMVYNAESQVASRVNYQKDESGKKIRVFKKLLNTN.

The protein belongs to the universal ribosomal protein uL24 family. As to quaternary structure, part of the 50S ribosomal subunit.

It is found in the plastid. The protein localises to the chloroplast. One of two assembly initiator proteins, it binds directly to the 5'-end of the 23S rRNA, where it nucleates assembly of the 50S subunit. This chain is Large ribosomal subunit protein uL24c (rpl24), found in Rhodomonas salina (Cryptomonas salina).